The primary structure comprises 813 residues: Leucine--tRNA ligase (813 aa).

The short motif at 41 to 51 (PYPSGTLHMGH) is the 'HIGH' region element. A 'KMSKS' region motif is present at residues 575–579 (KMSKS). Lys578 lines the ATP pocket.

This sequence belongs to the class-I aminoacyl-tRNA synthetase family.

It is found in the cytoplasm. The catalysed reaction is tRNA(Leu) + L-leucine + ATP = L-leucyl-tRNA(Leu) + AMP + diphosphate. This is Leucine--tRNA ligase from Francisella tularensis subsp. holarctica (strain FTNF002-00 / FTA).